The following is an 84-amino-acid chain: MSCCGGNCGCGSGCQCGGGCGGCKMFPDVEATATTKTFVLAAPSNKASSGGMEMAVESGENGGCGCNTCKCGTSCSGCSCCSCN.

The protein belongs to the metallothionein superfamily. Type 15 family.

It is found in the cytoplasm. The protein resides in the cytosol. In terms of biological role, metallothioneins have a high content of cysteine residues that bind various heavy metals. Acts as a reactive oxygen species (ROS) scavenger in the cytosol. Possesses superoxide anion and hydroxyl radical scavenging activities in vitro. Plays a role during root development, lateral root initiation and seed embryo germination, possibly by regulating levels of cytokinin. The chain is Metallothionein-like protein 2C (MT2C) from Oryza sativa subsp. indica (Rice).